Consider the following 532-residue polypeptide: MGARASVLSGGELDRWEKIRLRPGGKKKYKLKHIVWASRELERFAVNPSLLETSEGCRQILGQLQPSLQTGSEELKSLFNTVATLYCVHQRIEVKDTKEALEKIEEEQNKSKKKAQQAAADTGNSSKVSQNYPIVQNIQGQMVHQAISPRTLNAWVKVVEEKAFSPEVIPMFSALSEGATPQDLNTMLNTVGGHQAAMQMLKETINEEAAEWDRLHPAQAGPIAPGQMREPRGSDIAGTTSTLQEQIGWMTSNPPIPVGEIYKRWIILGLNKIVRMYSPSSILDIRQGPKEPFRDYVDRFYKTLRAEQASQEVKNWMTETLLVQNANPDCKTILKALGPAATLEEMMTACQGVGGPGHKARVLAEAMSQVTNSTTIMMQRGNFRNQRKIIKCFNCGKEGHLARNCRAPRKKGCWKCGKEGHQMKDCNERQANFLREDLAFLQGKAREFSSEQTRANSPSRGELQVWGRDNNPLSEAGAERQGTVSFSFPQITLWQRPLVTLKIGGQLKEALLDTGADDTVLEEMNSPGRWKP.

G2 carries the N-myristoyl glycine; by host lipid modification. The interval 7 to 31 is interaction with Gp41; it reads VLSGGELDRWEKIRLRPGGKKKYKL. Residues 8–43 form an interaction with host CALM1 region; the sequence is LSGGELDRWEKIRLRPGGKKKYKLKHIVWASRELER. The segment at 12–19 is interaction with host AP3D1; sequence ELDRWEKI. The segment at 14–33 is interaction with membrane phosphatidylinositol 4,5-bisphosphate and RNA; that stretch reads DRWEKIRLRPGGKKKYKLKH. The short motif at 16 to 22 is the Nuclear export signal element; the sequence is WEKIRLR. The Nuclear localization signal signature appears at 26–32; it reads KKKYKLK. Positions 73–77 are interaction with membrane phosphatidylinositol 4,5-bisphosphate; it reads EELKS. A disordered region spans residues 106–127; sequence EEQNKSKKKAQQAAADTGNSSK. Phosphotyrosine; by host is present on Y132. The segment at 189-227 is interaction with human PPIA/CYPA and NUP153; sequence NTVGGHQAAMQMLKETINEEAAEWDRLHPAQAGPIAPGQ. Residues 277–363 form a dimerization/Multimerization of capsid protein p24 region; it reads YSPSSILDIR…GGPGHKARVL (87 aa). CCHC-type zinc fingers lie at residues 390–407 and 411–428; these read IKCF…NCRA and KGCW…DCNE. Residues 447–481 are disordered; the sequence is EFSSEQTRANSPSRGELQVWGRDNNPLSEAGAERQ. Residues 450–459 are compositionally biased toward polar residues; the sequence is SEQTRANSPS. Positions 489 to 493 are dimerization of protease; sequence PQITL. Positions 508 to 532 constitute a Peptidase A2 domain; the sequence is KEALLDTGADDTVLEEMNSPGRWKP. The active-site For protease activity; shared with dimeric partner is D513.

In terms of assembly, homotrimer; further assembles as hexamers of trimers. Interacts with gp41 (via C-terminus). Interacts with host CALM1; this interaction induces a conformational change in the Matrix protein, triggering exposure of the myristate group. Interacts with host AP3D1; this interaction allows the polyprotein trafficking to multivesicular bodies during virus assembly. Part of the pre-integration complex (PIC) which is composed of viral genome, matrix protein, Vpr and integrase. As to quaternary structure, homodimer; the homodimer further multimerizes as homohexamers or homopentamers. Interacts with human PPIA/CYPA; This interaction stabilizes the capsid. Interacts with human NUP153. Interacts with host PDZD8; this interaction stabilizes the capsid. Interacts with monkey TRIM5; this interaction destabilizes the capsid. Homodimer, whose active site consists of two apposed aspartic acid residues. In terms of processing, specific enzymatic cleavages by the viral protease yield mature proteins. The protease is released by autocatalytic cleavage. The polyprotein is cleaved during and after budding, this process is termed maturation. Proteolytic cleavage of p66 RT removes the RNase H domain to yield the p51 RT subunit. Nucleocapsid protein p7 might be further cleaved after virus entry. Post-translationally, tyrosine phosphorylated presumably in the virion by a host kinase. Phosphorylation is apparently not a major regulator of membrane association. Phosphorylated possibly by host MAPK1; this phosphorylation is necessary for Pin1-mediated virion uncoating. In terms of processing, methylated by host PRMT6, impairing its function by reducing RNA annealing and the initiation of reverse transcription.

It localises to the host cell membrane. The protein localises to the host endosome. It is found in the host multivesicular body. The protein resides in the virion membrane. Its subcellular location is the host nucleus. It localises to the host cytoplasm. The protein localises to the virion. The catalysed reaction is Specific for a P1 residue that is hydrophobic, and P1' variable, but often Pro.. With respect to regulation, the viral protease is inhibited by many synthetic protease inhibitors (PIs), such as amprenavir, atazanavir, indinavir, loprinavir, nelfinavir, ritonavir and saquinavir. Use of protease inhibitors in tritherapy regimens permit more ambitious therapeutic strategies. In terms of biological role, mediates, with Gag polyprotein, the essential events in virion assembly, including binding the plasma membrane, making the protein-protein interactions necessary to create spherical particles, recruiting the viral Env proteins, and packaging the genomic RNA via direct interactions with the RNA packaging sequence (Psi). Gag-Pol polyprotein may regulate its own translation, by the binding genomic RNA in the 5'-UTR. At low concentration, the polyprotein would promote translation, whereas at high concentration, the polyprotein would encapsidate genomic RNA and then shut off translation. Targets the polyprotein to the plasma membrane via a multipartite membrane-binding signal, that includes its myristoylated N-terminus. Matrix protein is part of the pre-integration complex. Implicated in the release from host cell mediated by Vpu. Binds to RNA. Functionally, forms the conical core that encapsulates the genomic RNA-nucleocapsid complex in the virion. Most core are conical, with only 7% tubular. The core is constituted by capsid protein hexamer subunits. The core is disassembled soon after virion entry. Host restriction factors such as TRIM5-alpha or TRIMCyp bind retroviral capsids and cause premature capsid disassembly, leading to blocks in reverse transcription. Capsid restriction by TRIM5 is one of the factors which restricts HIV-1 to the human species. Host PIN1 apparently facilitates the virion uncoating. On the other hand, interactions with PDZD8 or CYPA stabilize the capsid. Its function is as follows. Encapsulates and protects viral dimeric unspliced genomic RNA (gRNA). Binds these RNAs through its zinc fingers. Acts as a nucleic acid chaperone which is involved in rearangement of nucleic acid secondary structure during gRNA retrotranscription. Also facilitates template switch leading to recombination. As part of the polyprotein, participates in gRNA dimerization, packaging, tRNA incorporation and virion assembly. In terms of biological role, aspartyl protease that mediates proteolytic cleavages of Gag and Gag-Pol polyproteins during or shortly after the release of the virion from the plasma membrane. Cleavages take place as an ordered, step-wise cascade to yield mature proteins. This process is called maturation. Displays maximal activity during the budding process just prior to particle release from the cell. Also cleaves Nef and Vif, probably concomitantly with viral structural proteins on maturation of virus particles. Hydrolyzes host EIF4GI and PABP1 in order to shut off the capped cellular mRNA translation. The resulting inhibition of cellular protein synthesis serves to ensure maximal viral gene expression and to evade host immune response. Also mediates cleavage of host YTHDF3. Mediates cleavage of host CARD8, thereby activating the CARD8 inflammasome, leading to the clearance of latent HIV-1 in patient CD4(+) T-cells after viral reactivation; in contrast, HIV-1 can evade CARD8-sensing when its protease remains inactive in infected cells prior to viral budding. The chain is Gag-Pol polyprotein (gag-pol) from Homo sapiens (Human).